The chain runs to 235 residues: Isoprenyl transferase (235 aa).

D21 is a catalytic residue. D21 provides a ligand contact to Mg(2+). Substrate-binding positions include 22–25 (GNAR), W26, K34, H38, and 66–68 (SSE). N69 serves as the catalytic Proton acceptor. Residues W70, R72, R183, and 189–191 (RIS) contribute to the substrate site. A Mg(2+)-binding site is contributed by E202.

Belongs to the UPP synthase family. Homodimer. Mg(2+) serves as cofactor.

Functionally, catalyzes the condensation of isopentenyl diphosphate (IPP) with allylic pyrophosphates generating different type of terpenoids. This is Isoprenyl transferase from Rickettsia conorii (strain ATCC VR-613 / Malish 7).